The chain runs to 494 residues: MARREGEVTETLLKKSTENRGEDRDGLGMKEKVWRESKKLWVVAGPAIFTRFSTSGLSLISQAFIGHLGSTELAAYSITLTVLLRFSNGILLGMASALETLCGQAYGAKQYHMLGIYLQRSWIVLTGCTICLMPIYIFAGPILLALGQEERLVRVARIIALWVIGINISFVPSFTCQMFLQAQSKNKIIAYVAAVSLGVHVFLSWLLVVHFDFGIAGAMTSSLVAHWLPNIAQVLFVTCGGCTETWRGFSWLAFKDLWPVFKLSVSSGGMICLELWYNSILILLTGNLKNAEVALNALAICININALEMMVAFGFMAAASVRVSNEIGSGNSNGAKFATMVVVSTSLSIGIIFFFIFLFLRERVSYIFTTSEAVATQVADLSPLLAFSILLNSIQPVLSGVAVGAGWQKYVTVVNLACYYLVGIPSGLFLGYVVGLQVKGVWLGMIFGIFVQTCVLTVMTMRTDWDQQVSSSLKRLNRWVEPESPSRNQTLQNE.

A disordered region spans residues 1-25 (MARREGEVTETLLKKSTENRGEDRD). The next 12 helical transmembrane spans lie at 40 to 60 (LWVV…LSLI), 74 to 94 (AAYS…LLGM), 123 to 143 (IVLT…GPIL), 158 to 178 (IIAL…TCQM), 188 to 208 (IIAY…WLLV), 223 to 243 (LVAH…GGCT), 268 to 288 (GGMI…TGNL), 297 to 317 (ALAI…GFMA), 340 to 360 (MVVV…FLFL), 384 to 404 (LLAF…VAVG), 416 to 436 (LACY…VVGL), and 441 to 461 (VWLG…VMTM).

This sequence belongs to the multi antimicrobial extrusion (MATE) (TC 2.A.66.1) family.

It is found in the membrane. This chain is Protein DETOXIFICATION 23, found in Arabidopsis thaliana (Mouse-ear cress).